Here is a 206-residue protein sequence, read N- to C-terminus: MKHNNVIPSSHFRKHWQNYVKTWFNQPARKTRRRVARQKKAVKIFPRPTSGPLRPVVHGQTLKYNMKVRAGKGFTLEELKVAGIPKKLAPTIGISVDHRRKNRSLEGLQSNVQRLKTYKAKLVVFPRRSRQVKAGDSTPEELANATQVQGDYMPIASVKAAMELVKLTADLKAFKAYDKIRLERTNARHAGARAKRAAEAEKEEKK.

The tract at residues 186 to 206 is disordered; it reads NARHAGARAKRAAEAEKEEKK. Residues 196–206 show a composition bias toward basic and acidic residues; sequence RAAEAEKEEKK.

This sequence belongs to the eukaryotic ribosomal protein eL13 family.

The polypeptide is Large ribosomal subunit protein eL13x (RPL13D) (Arabidopsis thaliana (Mouse-ear cress)).